Reading from the N-terminus, the 365-residue chain is 2-aminoethylphosphonate--pyruvate transaminase (365 aa).

Residue Lys-194 is modified to N6-(pyridoxal phosphate)lysine.

It belongs to the class-V pyridoxal-phosphate-dependent aminotransferase family. PhnW subfamily. In terms of assembly, homodimer. Pyridoxal 5'-phosphate serves as cofactor.

The enzyme catalyses (2-aminoethyl)phosphonate + pyruvate = phosphonoacetaldehyde + L-alanine. Functionally, involved in phosphonate degradation. This is 2-aminoethylphosphonate--pyruvate transaminase from Bacillus cereus (strain ATCC 10987 / NRS 248).